The sequence spans 115 residues: Replication initiation control protein YabA (115 aa).

Zn(2+) contacts are provided by His86, Cys88, Cys102, and Cys105.

This sequence belongs to the YabA family. As to quaternary structure, homotetramer. Interacts with both DnaA and DnaN, acting as a bridge between these two proteins. The cofactor is Zn(2+).

The protein resides in the cytoplasm. The protein localises to the nucleoid. Functionally, involved in control of chromosome replication initiation. Inhibits the cooperative binding of DnaA to the oriC region, thus negatively regulating initiation of chromosome replication. Inhibits the ability of DnaA-ATP to form a helix on DNA; does not disassemble preformed DnaA-DNA helices. Decreases the residence time of DnaA on the chromosome at its binding sites (oriC, replication forks and promoter-binding sites). Tethers DnaA to the replication machinery via the DNA polymerase beta sliding clamp subunit (dnaN). Associates with oriC and other DnaA targets on the chromosome in a DnaA-dependent manner. This Enterococcus faecalis (strain ATCC 700802 / V583) protein is Replication initiation control protein YabA.